We begin with the raw amino-acid sequence, 355 residues long: Holliday junction branch migration complex subunit RuvB (355 aa).

The segment at 1–193 (MGRFSEDSAD…FGFTAHMDFY (193 aa)) is large ATPase domain (RuvB-L). ATP-binding positions include L32, R33, G74, K77, T78, S79, 140 to 142 (EDF), R183, Y193, and R230. T78 contacts Mg(2+). A small ATPAse domain (RuvB-S) region spans residues 194–264 (EPSELERVLA…IAKYALEVYD (71 aa)). The tract at residues 267-355 (ELGLDRLDRA…VGLGQTGLFD (89 aa)) is head domain (RuvB-H). DNA-binding residues include R322 and R327.

This sequence belongs to the RuvB family. As to quaternary structure, homohexamer. Forms an RuvA(8)-RuvB(12)-Holliday junction (HJ) complex. HJ DNA is sandwiched between 2 RuvA tetramers; dsDNA enters through RuvA and exits via RuvB. An RuvB hexamer assembles on each DNA strand where it exits the tetramer. Each RuvB hexamer is contacted by two RuvA subunits (via domain III) on 2 adjacent RuvB subunits; this complex drives branch migration. In the full resolvosome a probable DNA-RuvA(4)-RuvB(12)-RuvC(2) complex forms which resolves the HJ.

Its subcellular location is the cytoplasm. It carries out the reaction ATP + H2O = ADP + phosphate + H(+). In terms of biological role, the RuvA-RuvB-RuvC complex processes Holliday junction (HJ) DNA during genetic recombination and DNA repair, while the RuvA-RuvB complex plays an important role in the rescue of blocked DNA replication forks via replication fork reversal (RFR). RuvA specifically binds to HJ cruciform DNA, conferring on it an open structure. The RuvB hexamer acts as an ATP-dependent pump, pulling dsDNA into and through the RuvAB complex. RuvB forms 2 homohexamers on either side of HJ DNA bound by 1 or 2 RuvA tetramers; 4 subunits per hexamer contact DNA at a time. Coordinated motions by a converter formed by DNA-disengaged RuvB subunits stimulates ATP hydrolysis and nucleotide exchange. Immobilization of the converter enables RuvB to convert the ATP-contained energy into a lever motion, pulling 2 nucleotides of DNA out of the RuvA tetramer per ATP hydrolyzed, thus driving DNA branch migration. The RuvB motors rotate together with the DNA substrate, which together with the progressing nucleotide cycle form the mechanistic basis for DNA recombination by continuous HJ branch migration. Branch migration allows RuvC to scan DNA until it finds its consensus sequence, where it cleaves and resolves cruciform DNA. The sequence is that of Holliday junction branch migration complex subunit RuvB from Mycolicibacterium vanbaalenii (strain DSM 7251 / JCM 13017 / BCRC 16820 / KCTC 9966 / NRRL B-24157 / PYR-1) (Mycobacterium vanbaalenii).